We begin with the raw amino-acid sequence, 105 residues long: Nucleoid-associated protein PTH_0052 (105 aa).

It belongs to the YbaB/EbfC family. In terms of assembly, homodimer.

It is found in the cytoplasm. It localises to the nucleoid. Binds to DNA and alters its conformation. May be involved in regulation of gene expression, nucleoid organization and DNA protection. This is Nucleoid-associated protein PTH_0052 from Pelotomaculum thermopropionicum (strain DSM 13744 / JCM 10971 / SI).